The sequence spans 199 residues: VAMP-like protein YKT61 (199 aa).

Residues 7 to 133 (LVLKCAPEAS…LTEALNKFQD (127 aa)) form the Longin domain. One can recognise a v-SNARE coiled-coil homology domain in the interval 139–199 (KLLKIQRELD…KKTNSCCTIL (61 aa)). Cysteine 195 is lipidated: S-palmitoyl cysteine. The residue at position 196 (cysteine 196) is a Cysteine methyl ester. Cysteine 196 is lipidated: S-geranylgeranyl cysteine. The propeptide at 197–199 (TIL) is removed in mature form.

The protein belongs to the synaptobrevin family. In terms of assembly, interacts with SYP41. Core constituent of the SNARE complex required for membrane fusion at the trans-Golgi network. In terms of tissue distribution, expressed ubiquitously in roots, stems, flowers and leaves.

The protein localises to the cell membrane. Its function is as follows. May be involved in the secretory pathway. Essential for membrane fusion mediated by either SYP41 or SYP61; triggers the fusion of phospholipid vesicles containing SYP41 or SYP61 and VTI12. This is VAMP-like protein YKT61 from Arabidopsis thaliana (Mouse-ear cress).